A 278-amino-acid chain; its full sequence is MATH domain and coiled-coil domain-containing protein At1g31400 (278 aa).

An MATH domain is found at E6–V131. Residues K232 to D267 are a coiled coil.

This chain is MATH domain and coiled-coil domain-containing protein At1g31400, found in Arabidopsis thaliana (Mouse-ear cress).